A 441-amino-acid chain; its full sequence is SVGFKAGVKDYKLTYYTPDYQTLDTDILAAFRVTPQPGVPPEEAGAAVAAESSTGTWTTVWTDGLTSLDRYKGRCYHIEPVAGEENQYIVYVAYPLDLFEEGSVTNMFTSIVGNVFGFKALRALRLEDLRIPPAYIKTFQGPPHGIQVERDKLNKYGRPLLGCTIKPKLGLSAKNYGRAVYECLRGGLDFTKDDENVNSQPFMRWRDRFLFCAEAIFKAQAETGEIKGHYLNATAGTCEEMIKRAVFARELGVPIVMHDYLTGGFTANTSLAHYCRDNGLLLHIHRAMHAVIDRQKNHGMHFRVLAKALRMSGGDHIHAGTVVGKLEGERDITLGFVDLLRDDYLEKDRSRGIYFNQFWVSMPGVLPVASGGIHVWHMPALTEIFGDDSVLQFGGGTLGHPWGNAPGAVANRVALEACVQARNEGYDLARDGNDIIRETCQ.

The residue at position 5 (Lys-5) is an N6,N6,N6-trimethyllysine. 2 residues coordinate substrate: Asn-114 and Thr-164. Lys-166 functions as the Proton acceptor in the catalytic mechanism. Residue Lys-168 coordinates substrate. Residues Lys-192, Asp-194, and Glu-195 each contribute to the Mg(2+) site. The residue at position 192 (Lys-192) is an N6-carboxylysine. His-285 serves as the catalytic Proton acceptor. Substrate-binding residues include Arg-286, His-318, and Ser-370.

This sequence belongs to the RuBisCO large chain family. Type I subfamily. In terms of assembly, heterohexadecamer of 8 large chains and 8 small chains; disulfide-linked. The disulfide link is formed within the large subunit homodimers. Requires Mg(2+) as cofactor. Post-translationally, the disulfide bond which can form in the large chain dimeric partners within the hexadecamer appears to be associated with oxidative stress and protein turnover.

Its subcellular location is the plastid. It is found in the chloroplast. It carries out the reaction 2 (2R)-3-phosphoglycerate + 2 H(+) = D-ribulose 1,5-bisphosphate + CO2 + H2O. The enzyme catalyses D-ribulose 1,5-bisphosphate + O2 = 2-phosphoglycolate + (2R)-3-phosphoglycerate + 2 H(+). RuBisCO catalyzes two reactions: the carboxylation of D-ribulose 1,5-bisphosphate, the primary event in carbon dioxide fixation, as well as the oxidative fragmentation of the pentose substrate in the photorespiration process. Both reactions occur simultaneously and in competition at the same active site. This Drosera petiolaris (Woolly sundew) protein is Ribulose bisphosphate carboxylase large chain.